The primary structure comprises 437 residues: Phosphomethylpyrimidine synthase (437 aa).

Residues asparagine 69, methionine 98, tyrosine 127, histidine 163, 185-187 (SRG), 226-229 (DACR), and glutamate 265 each bind substrate. Residue histidine 269 coordinates Zn(2+). Tyrosine 292 lines the substrate pocket. Histidine 333 serves as a coordination point for Zn(2+). Residues cysteine 409, cysteine 412, and cysteine 416 each contribute to the [4Fe-4S] cluster site.

Belongs to the ThiC family. [4Fe-4S] cluster is required as a cofactor.

It carries out the reaction 5-amino-1-(5-phospho-beta-D-ribosyl)imidazole + S-adenosyl-L-methionine = 4-amino-2-methyl-5-(phosphooxymethyl)pyrimidine + CO + 5'-deoxyadenosine + formate + L-methionine + 3 H(+). It functions in the pathway cofactor biosynthesis; thiamine diphosphate biosynthesis. Catalyzes the synthesis of the hydroxymethylpyrimidine phosphate (HMP-P) moiety of thiamine from aminoimidazole ribotide (AIR) in a radical S-adenosyl-L-methionine (SAM)-dependent reaction. In Clostridium botulinum (strain 657 / Type Ba4), this protein is Phosphomethylpyrimidine synthase.